Consider the following 105-residue polypeptide: Cuticle protein AMP2 (105 aa).

Positions 1–21 are disordered; sequence DRDAQTLTDERSDQGDGNFRY. Residues 16–81 enclose the Chitin-binding type R&amp;R domain; sequence DGNFRYEFET…PSSDLLPVGP (66 aa).

Arthrodial membrane.

This is Cuticle protein AMP2 from Homarus americanus (American lobster).